A 327-amino-acid polypeptide reads, in one-letter code: MSNPKVVVIGGGTGIPVVLKALRKEKIDLTAIVTVADDGGSSGRIRSAVNIAPPGDLRNVLIAMSDMPKFYADILQYRFDKSDGELAGHPLGNLIIAAVSEMQGSTYRAIQTLAQFFHVEGKIYPSSDAALTLHAVFKDGHEVLGESHIASYKGLIDHVYLTQTASGDSPVASKNVVKSIMEADTIVLGPGSLFTSILPNIVIPEICEALWKTSAKIVYVCNIMTQRGETEHFSDADHVRVLNEHIGTKVIDTVLVNIQEVPEEYMNTNKFDEYLVQVDHDFEALKAEEVNVISNNFLELRDGGAFHNGEAVAKEIVAISQRQEFRH.

Belongs to the gluconeogenesis factor family.

Its subcellular location is the cytoplasm. Functionally, required for morphogenesis under gluconeogenic growth conditions. This is Putative gluconeogenesis factor (yjiF) from Lactococcus lactis subsp. lactis (strain IL1403) (Streptococcus lactis).